A 101-amino-acid chain; its full sequence is Small ribosomal subunit protein bS18c (101 aa).

Belongs to the bacterial ribosomal protein bS18 family. As to quaternary structure, part of the 30S ribosomal subunit.

Its subcellular location is the plastid. It localises to the chloroplast. This Gossypium barbadense (Sea Island cotton) protein is Small ribosomal subunit protein bS18c.